Reading from the N-terminus, the 520-residue chain is Target of rapamycin complex 2 subunit MAPKAP1 (520 aa).

The region spanning 139–267 (QSILSVRLEQ…GFSTLALVEK (129 aa)) is the CRIM domain. The tract at residues 279–353 (LFVRINAAHG…QNSLEFCLVR (75 aa)) is SIN1-type RBD. Positions 310 to 333 (KRRKGSQRNSGPQYRLEKQSQPNV) are disordered. Residues 382–487 (QYKSFKVSMI…IVLKVNYILE (106 aa)) form the SIN1-type PH domain. A 1,2-diacyl-sn-glycero-3-phospho-(1D-myo-inositol-3,4,5-trisphosphate) is bound by residues arginine 393, lysine 428, and lysine 464.

This sequence belongs to the SIN1 family. Component of the mechanistic target of rapamycin complex 2 (mTORC2), consisting in two heterotretramers composed of MTOR, MLST8, RICTOR and MAPKAP1/SIN1. Contrary to mTORC1, mTORC2 does not bind to and is not sensitive to FKBP12-rapamycin.

It localises to the cell membrane. The protein resides in the endoplasmic reticulum membrane. Its subcellular location is the early endosome membrane. The protein localises to the late endosome membrane. It is found in the lysosome membrane. It localises to the golgi apparatus membrane. The protein resides in the mitochondrion outer membrane. Its subcellular location is the cytoplasm. The protein localises to the perinuclear region. It is found in the nucleus. Its activity is regulated as follows. Phosphatidylinositol 3,4,5-trisphosphate (PI(3,4,5)P3) promotes MTOR activation by relieving MAPKAP1/SIN1-mediated inhibition of MTOR that takes place in absence of PI(3,4,5)P3. Its function is as follows. Component of the mechanistic target of rapamycin complex 2 (mTORC2), which transduces signals from growth factors to pathways involved in proliferation, cytoskeletal organization, lipogenesis and anabolic output. In response to growth factors, mTORC2 phosphorylates and activates AGC protein kinase family members, including AKT (AKT1, AKT2 and AKT3), PKC (PRKCA, PRKCB and PRKCE) and SGK1. In contrast to mTORC1, mTORC2 is nutrient-insensitive. Within the mTORC2 complex, MAPKAP1/SIN1 acts as a substrate adapter which recognizes and binds AGC protein kinase family members for phosphorylation by MTOR. In Xenopus tropicalis (Western clawed frog), this protein is Target of rapamycin complex 2 subunit MAPKAP1 (mapkap1).